The sequence spans 388 residues: Phosphoglycerate kinase (388 aa).

Residues 21 to 23 (DLN), Arg-36, 59 to 62 (HLGR), Arg-114, and Arg-147 contribute to the substrate site. ATP is bound by residues Lys-198, Glu-315, and 341-344 (GGDT).

Belongs to the phosphoglycerate kinase family. Monomer.

It localises to the cytoplasm. It catalyses the reaction (2R)-3-phosphoglycerate + ATP = (2R)-3-phospho-glyceroyl phosphate + ADP. It functions in the pathway carbohydrate degradation; glycolysis; pyruvate from D-glyceraldehyde 3-phosphate: step 2/5. This Hahella chejuensis (strain KCTC 2396) protein is Phosphoglycerate kinase.